A 243-amino-acid chain; its full sequence is UPF0173 metal-dependent hydrolase Xaut_3786 (243 aa).

Belongs to the UPF0173 family.

The sequence is that of UPF0173 metal-dependent hydrolase Xaut_3786 from Xanthobacter autotrophicus (strain ATCC BAA-1158 / Py2).